A 383-amino-acid polypeptide reads, in one-letter code: Dual-specificity RNA methyltransferase RlmN (383 aa).

Catalysis depends on Glu93, which acts as the Proton acceptor. One can recognise a Radical SAM core domain in the interval 99 to 339; the sequence is EETRGTLCVS…TTIRKTRGDD (241 aa). Residues Cys106 and Cys344 are joined by a disulfide bond. [4Fe-4S] cluster is bound by residues Cys113, Cys117, and Cys120. Residues 170-171, Ser202, 224-226, and Asn301 contribute to the S-adenosyl-L-methionine site; these read GE and SLH. The S-methylcysteine intermediate role is filled by Cys344.

Belongs to the radical SAM superfamily. RlmN family. The cofactor is [4Fe-4S] cluster.

It is found in the cytoplasm. It catalyses the reaction adenosine(2503) in 23S rRNA + 2 reduced [2Fe-2S]-[ferredoxin] + 2 S-adenosyl-L-methionine = 2-methyladenosine(2503) in 23S rRNA + 5'-deoxyadenosine + L-methionine + 2 oxidized [2Fe-2S]-[ferredoxin] + S-adenosyl-L-homocysteine. The catalysed reaction is adenosine(37) in tRNA + 2 reduced [2Fe-2S]-[ferredoxin] + 2 S-adenosyl-L-methionine = 2-methyladenosine(37) in tRNA + 5'-deoxyadenosine + L-methionine + 2 oxidized [2Fe-2S]-[ferredoxin] + S-adenosyl-L-homocysteine. Its function is as follows. Specifically methylates position 2 of adenine 2503 in 23S rRNA and position 2 of adenine 37 in tRNAs. m2A2503 modification seems to play a crucial role in the proofreading step occurring at the peptidyl transferase center and thus would serve to optimize ribosomal fidelity. The protein is Dual-specificity RNA methyltransferase RlmN of Ralstonia pickettii (strain 12J).